The primary structure comprises 178 residues: Large ribosomal subunit protein bL25 (178 aa).

It belongs to the bacterial ribosomal protein bL25 family. CTC subfamily. Part of the 50S ribosomal subunit; part of the 5S rRNA/L5/L18/L25 subcomplex. Contacts the 5S rRNA. Binds to the 5S rRNA independently of L5 and L18.

In terms of biological role, this is one of the proteins that binds to the 5S RNA in the ribosome where it forms part of the central protuberance. This Sulfurimonas denitrificans (strain ATCC 33889 / DSM 1251) (Thiomicrospira denitrificans (strain ATCC 33889 / DSM 1251)) protein is Large ribosomal subunit protein bL25.